The sequence spans 84 residues: Small ribosomal subunit protein uS17 (84 aa).

It belongs to the universal ribosomal protein uS17 family. Part of the 30S ribosomal subunit.

Functionally, one of the primary rRNA binding proteins, it binds specifically to the 5'-end of 16S ribosomal RNA. The sequence is that of Small ribosomal subunit protein uS17 from Borrelia garinii subsp. bavariensis (strain ATCC BAA-2496 / DSM 23469 / PBi) (Borreliella bavariensis).